Consider the following 122-residue polypeptide: Large ribosomal subunit protein uL14c (122 aa).

The protein belongs to the universal ribosomal protein uL14 family. In terms of assembly, part of the 50S ribosomal subunit.

It localises to the plastid. The protein resides in the chloroplast. Its function is as follows. Binds to 23S rRNA. In Welwitschia mirabilis (Tree tumbo), this protein is Large ribosomal subunit protein uL14c.